We begin with the raw amino-acid sequence, 490 residues long: Dual specificity protein kinase CLK3 (490 aa).

Tyr-7 is subject to Phosphotyrosine. Phosphoserine occurs at positions 9, 49, 51, 67, 76, and 78. Residues 22–138 form a disordered region; it reads RRRSYSREHE…SKRSSRSVED (117 aa). Basic and acidic residues-rich tracts occupy residues 26-56 and 63-76; these read YSRE…DRLP and EHRD…EDRS. Residues 103 to 116 show a composition bias toward basic residues; that stretch reads TRKHAHHCHKRRTR. A compositionally biased stretch (low complexity) spans 117-130; that stretch reads SCSSASSRSQQSSK. Position 135 is a phosphoserine (Ser-135). A Protein kinase domain is found at 156-472; it reads YEIVGNLGEG…LAEALLHPFF (317 aa). Residues 162–170 and Lys-186 contribute to the ATP site; that span reads LGEGTFGKV. Asp-283 (proton acceptor) is an active-site residue.

Belongs to the protein kinase superfamily. CMGC Ser/Thr protein kinase family. Lammer subfamily. Autophosphorylates on all three types of residues.

It localises to the nucleus. It is found in the cytoplasm. Its subcellular location is the cytoplasmic vesicle. The protein resides in the secretory vesicle. The protein localises to the acrosome. It catalyses the reaction L-seryl-[protein] + ATP = O-phospho-L-seryl-[protein] + ADP + H(+). The enzyme catalyses L-threonyl-[protein] + ATP = O-phospho-L-threonyl-[protein] + ADP + H(+). It carries out the reaction L-tyrosyl-[protein] + ATP = O-phospho-L-tyrosyl-[protein] + ADP + H(+). Leucettine L41 inhibits its kinase activity and affects the regulation of alternative splicing mediated by phosphorylation of SR proteins. In terms of biological role, dual specificity kinase acting on both serine/threonine and tyrosine-containing substrates. Phosphorylates serine- and arginine-rich (SR) proteins of the spliceosomal complex. May be a constituent of a network of regulatory mechanisms that enable SR proteins to control RNA splicing and can cause redistribution of SR proteins from speckles to a diffuse nucleoplasmic distribution. Phosphorylates SRSF1 and SRSF3. Regulates the alternative splicing of tissue factor (F3) pre-mRNA in endothelial cells. The chain is Dual specificity protein kinase CLK3 (CLK3) from Bos taurus (Bovine).